The sequence spans 451 residues: tRNA-2-methylthio-N(6)-dimethylallyladenosine synthase (451 aa).

An MTTase N-terminal domain is found at 1-116 (MTYFFETYGC…LPQIFDEIKA (116 aa)). [4Fe-4S] cluster-binding residues include Cys10, Cys46, Cys79, Cys162, Cys166, and Cys169. The 237-residue stretch at 148–384 (SPKSFQSYVP…IDLQLKITAK (237 aa)) folds into the Radical SAM core domain. Residues 387-451 (KAKLGKKVDI…KGKTFRANLN (65 aa)) enclose the TRAM domain.

Belongs to the methylthiotransferase family. MiaB subfamily. In terms of assembly, monomer. Requires [4Fe-4S] cluster as cofactor.

The protein localises to the cytoplasm. It carries out the reaction N(6)-dimethylallyladenosine(37) in tRNA + (sulfur carrier)-SH + AH2 + 2 S-adenosyl-L-methionine = 2-methylsulfanyl-N(6)-dimethylallyladenosine(37) in tRNA + (sulfur carrier)-H + 5'-deoxyadenosine + L-methionine + A + S-adenosyl-L-homocysteine + 2 H(+). Its function is as follows. Catalyzes the methylthiolation of N6-(dimethylallyl)adenosine (i(6)A), leading to the formation of 2-methylthio-N6-(dimethylallyl)adenosine (ms(2)i(6)A) at position 37 in tRNAs that read codons beginning with uridine. The chain is tRNA-2-methylthio-N(6)-dimethylallyladenosine synthase from Treponema denticola (strain ATCC 35405 / DSM 14222 / CIP 103919 / JCM 8153 / KCTC 15104).